The sequence spans 122 residues: Small ribosomal subunit protein uS10y (122 aa).

The protein belongs to the universal ribosomal protein uS10 family.

This Arabidopsis thaliana (Mouse-ear cress) protein is Small ribosomal subunit protein uS10y (RPS20B).